Consider the following 329-residue polypeptide: Lipoyl synthase (329 aa).

Residues Cys-55, Cys-60, Cys-66, Cys-81, Cys-85, Cys-88, and Ser-292 each contribute to the [4Fe-4S] cluster site. The 215-residue stretch at 67–281 (WEDREATFLI…KAEAEAIGFL (215 aa)) folds into the Radical SAM core domain.

This sequence belongs to the radical SAM superfamily. Lipoyl synthase family. [4Fe-4S] cluster is required as a cofactor.

The protein resides in the cytoplasm. The catalysed reaction is [[Fe-S] cluster scaffold protein carrying a second [4Fe-4S](2+) cluster] + N(6)-octanoyl-L-lysyl-[protein] + 2 oxidized [2Fe-2S]-[ferredoxin] + 2 S-adenosyl-L-methionine + 4 H(+) = [[Fe-S] cluster scaffold protein] + N(6)-[(R)-dihydrolipoyl]-L-lysyl-[protein] + 4 Fe(3+) + 2 hydrogen sulfide + 2 5'-deoxyadenosine + 2 L-methionine + 2 reduced [2Fe-2S]-[ferredoxin]. It participates in protein modification; protein lipoylation via endogenous pathway; protein N(6)-(lipoyl)lysine from octanoyl-[acyl-carrier-protein]: step 2/2. Catalyzes the radical-mediated insertion of two sulfur atoms into the C-6 and C-8 positions of the octanoyl moiety bound to the lipoyl domains of lipoate-dependent enzymes, thereby converting the octanoylated domains into lipoylated derivatives. The sequence is that of Lipoyl synthase from Clavibacter sepedonicus (Clavibacter michiganensis subsp. sepedonicus).